The sequence spans 624 residues: RQC trigger complex subunit CUE3 (624 aa).

The region spanning V316–T359 is the CUE domain. 3 disordered regions span residues R366–I390, R435–N469, and S546–I624. A Phosphoserine modification is found at S377. Composition is skewed to basic and acidic residues over residues D443 to L455 and E568 to K589. A compositionally biased stretch (basic residues) spans K590 to A617.

As to quaternary structure, component of the RQT (ribosome quality control trigger) complex, composed of SLH1, CUE3, and RQT4. Interacts with ubiquitin; the interaction is direct. Interacts with SLH1. Interacts with RQT4. Interacts with HEL2. Associates with translating ribosomes.

The protein resides in the cytoplasm. In terms of biological role, involved in activation of the ribosome quality control (RQC) pathway, a pathway that degrades nascent peptide chains during problematic translation. Specifically recognizes and binds RPS20/uS10 ubiquitinated by HEL2, promoting recruitment of the RQT (ribosome quality control trigger) complex on stalled ribosomes, followed by disassembly of stalled ribosomes. The polypeptide is RQC trigger complex subunit CUE3 (CUE3) (Saccharomyces cerevisiae (strain ATCC 204508 / S288c) (Baker's yeast)).